The chain runs to 498 residues: Nucleobase transporter PlAzg2 (498 aa).

The next 13 membrane-spanning stretches (helical) occupy residues 88–108 (LLAG…NSSI), 118–138 (AGII…GLWG), 142–162 (LVIV…VQGM), 169–189 (ALAA…TSLV), 203–223 (AISV…GGVI), 236–256 (FADP…ILYI), 259–279 (VPGN…LFKA), 312–332 (TLVI…VGLI), 357–377 (ILSG…AAGI), 388–408 (IATG…TLVP), 412–432 (VAPI…HISF), 443–463 (FIIA…IGFI), and 478–498 (VKPL…LQTM).

Belongs to the nucleobase:cation symporter-2 (NCS2) (TC 2.A.40) family. Azg-like subfamily.

The protein resides in the cell membrane. With respect to regulation, inhibited by the proton gradient disruptor carbonyl cyanide m-chlorophenylhydrazone (CCCP), but not by the sodium gradient disruptor ouabain. Transports adenine, guanine, hypoxanthine, xanthine, cytosine and uracil. Transport is probably proton-dependent. This Paenibacillus larvae subsp. larvae (strain NRRL B-3650 / LMG 16245) protein is Nucleobase transporter PlAzg2.